The following is a 463-amino-acid chain: Chaperone SurA (463 aa).

A signal peptide spans 1–25 (MTKPFSVVLASLLAITSTVSPLASA). PpiC domains lie at 174–276 (GSQY…KLVE) and 289–388 (VTEY…QRVG). 2 disordered regions span residues 329–348 (ATAK…GDLG) and 431–463 (YRTG…KPTR). The segment covering 441 to 450 (ATAAPAKSPD) has biased composition (low complexity). Residues 451-463 (PAAPSPPPAKPTR) show a composition bias toward pro residues.

Its subcellular location is the periplasm. The enzyme catalyses [protein]-peptidylproline (omega=180) = [protein]-peptidylproline (omega=0). Its function is as follows. Chaperone involved in the correct folding and assembly of outer membrane proteins. Recognizes specific patterns of aromatic residues and the orientation of their side chains, which are found more frequently in integral outer membrane proteins. May act in both early periplasmic and late outer membrane-associated steps of protein maturation. The polypeptide is Chaperone SurA (Xanthomonas axonopodis pv. citri (strain 306)).